A 745-amino-acid polypeptide reads, in one-letter code: Exocyst complex component 3 (745 aa).

Lys-28 carries the post-translational modification N6-acetyllysine.

The protein belongs to the SEC6 family. In terms of assembly, the exocyst complex is composed of EXOC1, EXOC2, EXOC3, EXOC4, EXOC5, EXOC6, EXOC7 and EXOC8. Interacts with EXOC3L1. Interacts with BIRC6/bruce. Interacts with MYRIP. Interacts with SLC6A9.

The protein localises to the cytoplasm. It localises to the perinuclear region. Its subcellular location is the cell projection. It is found in the growth cone. The protein resides in the neuron projection. The protein localises to the midbody. It localises to the golgi apparatus. Component of the exocyst complex involved in the docking of exocytic vesicles with fusion sites on the plasma membrane. This chain is Exocyst complex component 3 (EXOC3), found in Bos taurus (Bovine).